The primary structure comprises 471 residues: MYELQQHRKFSALDEMLPAFYYCYLLCFPVSSDNRASTSELLQTSLSSLAEERPYLTGTVRRDMESSVRKGHLILDIPNPFEDLRIVFNDLTGPKSQWKETYQDLKDTGMPPHKLDANLLAPLTAGIGETRKVMSVQANFIHGGLLIAFCFHHNFVDAYGAGRIIARFSDHCNGTVDLKNSADPEGDGTDSRGIADLLDVELLKKQYKFEDLESDPNLWRLNCLEFRGVNDFRWPDFIPALLPVRKPPVISSMFSFSSDALAEIKAMAQPNQSGAWVSTNDALVAFLWRHTMRARFPSSRTESEPPNRKSNVVVALDGRKDLSISPTYIGNCLFHCFTDLPINMVGSESTHLGDIAIKVRQTITAARNKTLLKAVVGLAATHPDCQTIKYANDNLGPDLYVTSWIDLPFYKLEWGPLGKTEFFRIPDRQFESLCCILPPKDGVVQLITSMEEDHSKRLRSDAEFTRFATYR.

The protein belongs to the fumigaclavine B O-acetyltransferase family. Monomer.

It functions in the pathway sesquiterpene biosynthesis. Its function is as follows. O-acetyltransferase; part of the gene cluster that mediates the biosynthesis of PR-toxin, a bicyclic sesquiterpene belonging to the eremophilane class and acting as a mycotoxin. The first step of the pathway is catalyzed by the aristolochene synthase which performs the cyclization of trans,trans-farnesyl diphosphate (FPP) to the bicyclic sesquiterpene aristolochene. Following the formation of aristolochene, the non-oxygenated aristolochene is converted to the trioxygenated intermediate eremofortin B, via 7-epi-neopetasone. This conversion appears to involve three enzymes, a hydroxysterol oxidase-like enzyme, the quinone-oxidase prx3 that forms the quinone-type-structure in the bicyclic nucleus of aristolochene with the C8-oxo group and the C-3 hydroxyl group, and the P450 monooxygenase ORF6 that introduces the epoxide at the double bond between carbons 1 and 2. No monoxy or dioxy-intermediates have been reported to be released to the broth, so these three early oxidative reactions may be coupled together. Eremofortin B is further oxidized by another P450 monooxygenase, that introduces a second epoxide between carbons 7 and 11 prior to acetylation to eremofortin A by the acetyltransferase ORF8. The second epoxidation may be performed by a second P450 monooxygenase. After the acetylation step, eremofortin A is converted to eremofortin C and then to PR-toxin. First the conversion of eremofortin A to eremofortin C proceeds by oxidation of the side chain of the molecule at C-12 and is catalyzed by the short-chain oxidoreductase prx1. The cytochrome P450 monooxygenase ORF6 is probably also involved in this step. The primary alcohol formed at C-12 is finally oxidized by the short-chain alcohol dehydrogenase prx4 that forms PR-toxin. The protein is Eremophilane O-acetyltransferase ORF8 of Penicillium roqueforti (strain FM164).